A 96-amino-acid polypeptide reads, in one-letter code: 2Fe-2S ferredoxin-5 (96 aa).

One can recognise a 2Fe-2S ferredoxin-type domain in the interval 2 to 96 (PKVIVANINA…GKGDVVIYLP (95 aa)). Positions 36, 42, 45, and 81 each coordinate [2Fe-2S] cluster.

The protein belongs to the adrenodoxin/putidaredoxin family. The cofactor is [2Fe-2S] cluster.

Its function is as follows. May be involved in the assembly of iron-sulfur clusters (Isc-Fd). In Aquifex aeolicus (strain VF5), this protein is 2Fe-2S ferredoxin-5 (fdx5).